A 654-amino-acid polypeptide reads, in one-letter code: MICOS complex subunit MIC60-2 (654 aa).

The N-terminal 12 residues, 1 to 12, are a transit peptide targeting the mitochondrion; that stretch reads MRGSRNLLTQRL. Residues 13-20 lie on the Mitochondrial matrix side of the membrane; that stretch reads ASSRATGS. Residues 21 to 43 traverse the membrane as a helical segment; it reads SGGLKFVGATVGAVTAGAAGVAG. The Mitochondrial intermembrane segment spans residues 44–654; that stretch reads YASYDNEFRK…AALTSIRSTY (611 aa). The span at 115–129 shows a compositional bias: basic and acidic residues; it reads LKETTEPKKIEKKPE. The disordered stretch occupies residues 115–140; that stretch reads LKETTEPKKIEKKPENPYIGAKTPLN.

Belongs to the MICOS complex subunit Mic60 family. As to quaternary structure, component of the mitochondrial contact site and cristae organizing system (MICOS) complex. In terms of tissue distribution, expressed in the gonads and muscle cells.

Its subcellular location is the mitochondrion inner membrane. It localises to the cytoplasm. Functionally, sustains mitochondrial morphology probably through maintaining cristae morphology. May act as a component of the MICOS complex, a large protein complex of the mitochondria. The protein is MICOS complex subunit MIC60-2 of Caenorhabditis elegans.